The chain runs to 648 residues: Nucleoside triphosphatase I (648 aa).

The Helicase ATP-binding domain occupies 48–213 (FIGLKNLNSM…NNLIGLLRPN (166 aa)). An ATP-binding site is contributed by 61-68 (WDTGTGKT). Positions 151–154 (DEVH) match the DEXH box motif. Residues 379–542 (YIEACRIILN…KINVVFDLLK (164 aa)) enclose the Helicase C-terminal domain. The binding to the cap-specific mRNA (nucleoside-2'-O-)-methyltransferase stretch occupies residues 468 to 534 (DIIILDMPWN…DIIKNKQGKI (67 aa)).

It belongs to the helicase family. NPH I subfamily. In terms of assembly, monomer. Interacts (via C-terminus) with RAP94 (via N-terminus). Interacts with the cap-specific mRNA (nucleoside-2'-O-)-methyltransferase.

It localises to the virion. It catalyses the reaction a ribonucleoside 5'-triphosphate + H2O = a ribonucleoside 5'-diphosphate + phosphate + H(+). Its function is as follows. DNA-dependent ATPase required for providing the needed energy to achieve the termination of early transcripts. Acts in concert with the RAP94 subunit of the virion RNA polymerase and the capping enzyme/VTF to catalyze release of UUUUUNU-containing nascent RNA from the elongation complex. NPH-I must bind ssDNA in order to exhibit ATPase activity. In Choristoneura fumiferana (Spruce budworm moth), this protein is Nucleoside triphosphatase I (NPH1).